A 331-amino-acid chain; its full sequence is Quinone oxidoreductase (331 aa).

N-acetylalanine is present on A2. An N6-acetyllysine modification is found at K23. Phosphoserine is present on S35. NADP(+) is bound by residues Y53, 158–161 (SGGV), and G181. An N6-acetyllysine modification is found at K186. Residues H200, N231, 248–251 (VGCR), and 271–273 (VSL) each bind NADP(+). K298 carries the N6-succinyllysine modification.

This sequence belongs to the zinc-containing alcohol dehydrogenase family. Quinone oxidoreductase subfamily. In terms of assembly, homotetramer.

The protein resides in the cytoplasm. It carries out the reaction 2 a quinone + NADPH + H(+) = 2 a 1,4-benzosemiquinone + NADP(+). Does not have alcohol dehydrogenase activity. Binds NADP and acts through a one-electron transfer process. Orthoquinones, such as 1,2-naphthoquinone or 9,10-phenanthrenequinone, are the best substrates (in vitro). May act in the detoxification of xenobiotics. Interacts with (AU)-rich elements (ARE) in the 3'-UTR of target mRNA species and enhances their stability. NADPH binding interferes with mRNA binding. This is Quinone oxidoreductase (Cryz) from Mus musculus (Mouse).